Here is a 125-residue protein sequence, read N- to C-terminus: Oxytocin-neurophysin 1 (125 aa).

The first 19 residues, 1 to 19 (MAGSSLACCLLGLLALTSA), serve as a signal peptide directing secretion. Cys20 and Cys25 are joined by a disulfide. The residue at position 28 (Gly28) is a Glycine amide. 7 disulfide bridges follow: Cys41/Cys85, Cys44/Cys58, Cys52/Cys75, Cys59/Cys65, Cys92/Cys104, Cys98/Cys116, and Cys105/Cys110.

Belongs to the vasopressin/oxytocin family. Interacts with oxytocin receptor (Ki=1.5 nM). Interacts with vasopressin V1aR/AVPR1A (Ki=37 nM), V1bR/AVPR1B (Ki=222 nM), and V2R/AVPR2 receptors (Ki=823 nM).

It is found in the secreted. In terms of biological role, neurophysin 1 specifically binds oxytocin. Functionally, oxytocin causes contraction of the smooth muscle of the uterus and of the mammary gland. Acts by binding to oxytocin receptor (OXTR). In Bos taurus (Bovine), this protein is Oxytocin-neurophysin 1 (OXT).